We begin with the raw amino-acid sequence, 61 residues long: Defensin-like peptide TXKs2 (61 aa).

An N-terminal signal peptide occupies residues 1–19; that stretch reads MTYAILIIVSLLLISDRIS. Residues 20-22 constitute a propeptide that is removed on maturation; the sequence is NVV. 3 disulfides stabilise this stretch: Cys26–Cys47, Cys33–Cys56, and Cys37–Cys58.

The protein belongs to the invertebrate defensin family. Expressed by the venom gland.

It localises to the secreted. In terms of biological role, antibacterial protein. This Olivierus martensii (Manchurian scorpion) protein is Defensin-like peptide TXKs2.